A 352-amino-acid chain; its full sequence is Pollen-specific protein SF21 (352 aa).

This sequence belongs to the NDRG family. As to expression, pollen.

In Helianthus annuus (Common sunflower), this protein is Pollen-specific protein SF21 (SF21).